Reading from the N-terminus, the 169-residue chain is Phosphopantetheine adenylyltransferase (169 aa).

Serine 10 contacts substrate. Residues 10–11 and histidine 18 each bind ATP; that span reads SF. The substrate site is built by lysine 42, leucine 74, and arginine 88. Residues 89–91, glutamate 99, and 124–130 contribute to the ATP site; these read GLR and YAFLSSS.

This sequence belongs to the bacterial CoaD family. In terms of assembly, homohexamer. It depends on Mg(2+) as a cofactor.

It localises to the cytoplasm. It catalyses the reaction (R)-4'-phosphopantetheine + ATP + H(+) = 3'-dephospho-CoA + diphosphate. The protein operates within cofactor biosynthesis; coenzyme A biosynthesis; CoA from (R)-pantothenate: step 4/5. Functionally, reversibly transfers an adenylyl group from ATP to 4'-phosphopantetheine, yielding dephospho-CoA (dPCoA) and pyrophosphate. The sequence is that of Phosphopantetheine adenylyltransferase from Geobacillus sp. (strain WCH70).